The primary structure comprises 570 residues: Adenine deaminase (570 aa).

The protein belongs to the metallo-dependent hydrolases superfamily. Adenine deaminase family. Requires Mn(2+) as cofactor.

It catalyses the reaction adenine + H2O + H(+) = hypoxanthine + NH4(+). The chain is Adenine deaminase from Clostridium acetobutylicum (strain ATCC 824 / DSM 792 / JCM 1419 / IAM 19013 / LMG 5710 / NBRC 13948 / NRRL B-527 / VKM B-1787 / 2291 / W).